Consider the following 352-residue polypeptide: Protein NDRG4 (352 aa).

Phosphoserine occurs at positions 298, 317, and 323. Low complexity predominate over residues 314–323 (RTASLTSASS). Residues 314–352 (RTASLTSASSVDGSRPQACTHSESSEGLGQVNHTMEVSC) form a disordered region. Positions 330–352 (QACTHSESSEGLGQVNHTMEVSC) are enriched in polar residues.

Belongs to the NDRG family. Phosphorylated in an aortic smooth muscle cell line, following PDGF treatment. As to expression, expressed predominantly in brain and heart (at protein level). In the brain, detected in astrocytes. Isoform 1 and isoform 2 are only expressed in brain. Isoform 3 is expressed in both heart and brain. Up-regulated in glioblastoma multiforme cells.

It is found in the cytoplasm. Its subcellular location is the cytosol. Functionally, contributes to the maintenance of intracerebral BDNF levels within the normal range, which is necessary for the preservation of spatial learning and the resistance to neuronal cell death caused by ischemic stress. May enhance growth factor-induced ERK1 and ERK2 phosphorylation, including that induced by PDGF and FGF. May attenuate NGF-promoted ELK1 phosphorylation in a microtubule-dependent manner. This is Protein NDRG4 (NDRG4) from Homo sapiens (Human).